Here is a 283-residue protein sequence, read N- to C-terminus: Protein/nucleic acid deglycase HchA (283 aa).

His-86, Glu-91, and His-123 together coordinate Zn(2+). Catalysis depends on Cys-185, which acts as the Nucleophile.

This sequence belongs to the peptidase C56 family. HchA subfamily. Homodimer.

The protein resides in the cytoplasm. It carries out the reaction N(omega)-(1-hydroxy-2-oxopropyl)-L-arginyl-[protein] + H2O = lactate + L-arginyl-[protein] + H(+). The enzyme catalyses N(6)-(1-hydroxy-2-oxopropyl)-L-lysyl-[protein] + H2O = lactate + L-lysyl-[protein] + H(+). It catalyses the reaction S-(1-hydroxy-2-oxopropyl)-L-cysteinyl-[protein] + H2O = lactate + L-cysteinyl-[protein] + H(+). The catalysed reaction is N(omega)-(1-hydroxy-2-oxoethyl)-L-arginyl-[protein] + H2O = L-arginyl-[protein] + glycolate + H(+). It carries out the reaction N(6)-(1-hydroxy-2-oxoethyl)-L-lysyl-[protein] + H2O = glycolate + L-lysyl-[protein] + H(+). The enzyme catalyses S-(1-hydroxy-2-oxoethyl)-L-cysteinyl-[protein] + H2O = glycolate + L-cysteinyl-[protein] + H(+). It catalyses the reaction N(2)-(1-hydroxy-2-oxopropyl)-dGTP + H2O = lactate + dGTP + H(+). The catalysed reaction is N(2)-(1-hydroxy-2-oxopropyl)-GTP + H2O = lactate + GTP + H(+). It carries out the reaction N(2)-(1-hydroxy-2-oxopropyl)-GDP + H2O = lactate + GDP + H(+). The enzyme catalyses N(2)-(1-hydroxy-2-oxopropyl)-GMP + H2O = lactate + GMP + H(+). It catalyses the reaction N(2)-(1-hydroxy-2-oxoethyl)-dGTP + H2O = dGTP + glycolate + H(+). The catalysed reaction is N(2)-(1-hydroxy-2-oxoethyl)-GTP + H2O = glycolate + GTP + H(+). It carries out the reaction N(2)-(1-hydroxy-2-oxoethyl)-GDP + H2O = glycolate + GDP + H(+). The enzyme catalyses N(2)-(1-hydroxy-2-oxoethyl)-GMP + H2O = glycolate + GMP + H(+). It catalyses the reaction an N(2)-(1-hydroxy-2-oxopropyl)-guanosine in RNA + H2O = a guanosine in RNA + lactate + H(+). The catalysed reaction is an N(2)-(1-hydroxy-2-oxopropyl)-2'-deoxyguanosine in DNA + H2O = a 2'-deoxyguanosine in DNA + lactate + H(+). It carries out the reaction an N(2)-(1-hydroxy-2-oxoethyl)-guanosine in RNA + H2O = a guanosine in RNA + glycolate + H(+). The enzyme catalyses an N(2)-(1-hydroxy-2-oxoethyl)-2'-deoxyguanosine in DNA + H2O = a 2'-deoxyguanosine in DNA + glycolate + H(+). In terms of biological role, protein and nucleotide deglycase that catalyzes the deglycation of the Maillard adducts formed between amino groups of proteins or nucleotides and reactive carbonyl groups of glyoxals. Thus, functions as a protein deglycase that repairs methylglyoxal- and glyoxal-glycated proteins, and releases repaired proteins and lactate or glycolate, respectively. Deglycates cysteine, arginine and lysine residues in proteins, and thus reactivates these proteins by reversing glycation by glyoxals. Acts on early glycation intermediates (hemithioacetals and aminocarbinols), preventing the formation of Schiff bases and advanced glycation endproducts (AGE). Also functions as a nucleotide deglycase able to repair glycated guanine in the free nucleotide pool (GTP, GDP, GMP, dGTP) and in DNA and RNA. Is thus involved in a major nucleotide repair system named guanine glycation repair (GG repair), dedicated to reversing methylglyoxal and glyoxal damage via nucleotide sanitization and direct nucleic acid repair. Plays an important role in protecting cells from carbonyl stress. This is Protein/nucleic acid deglycase HchA from Shigella sonnei (strain Ss046).